The primary structure comprises 68 residues: Lividin-1 (68 aa).

The signal sequence occupies residues 1–22 (MFTLKKSLLLLFFLGTINLSLC). The propeptide occupies 23–42 (QEERNADEEERRDERNVEVE). A disulfide bond links Cys62 and Cys68.

In terms of tissue distribution, expressed by the skin glands.

It is found in the secreted. In terms of biological role, antimicrobial peptide. This chain is Lividin-1, found in Odorrana livida (Green mountain frog).